Here is a 159-residue protein sequence, read N- to C-terminus: C-type lectin BJcuL (159 aa).

Positions 1–24 are cleaved as a signal peptide; sequence MGRFLFVASSACWFVFLSLSGAKG. Cystine bridges form between Cys27–Cys38, Cys55–Cys155, Cys62–Cys157, and Cys130–Cys147. Residues 34–156 form the C-type lectin domain; that stretch reads MNGLCYKIFN…CESKNAFLCQ (123 aa). Residues Gln120, Asp122, Glu128, Asn143, and Asp144 each contribute to the Ca(2+) site. The Galactose-binding motif lies at 120 to 122; the sequence is QPD.

It belongs to the true venom lectin family. In terms of assembly, homodecamer of disulfide-linked dimers arranged in two 5-fold symmetric pentamers. Binds the gentamicin group of aminoglycoside antibiotics at the dimeric interface near the intermolecular disulfide bond. In terms of tissue distribution, expressed by the venom gland.

The protein localises to the secreted. Its activity is regulated as follows. Hemagglutination activity is inhibited by lactose (MIC=2.5 mM), galactose (MIC=10 mM), and raffinose. Is very weakly or not inhibited by gentamicin, kanamycin, glucose and sucrose. Galactose-binding lectin which recognizes specific carbohydrate structures and agglutinates a variety of animal cells by binding to cell-surface glycoproteins and glycolipids. Calcium-dependent lectin. Also binds lactose and raffinose. Shows high hemagglutinating activity on mammalian erythrocytes. It also involved in immunological functions, since it is able of inducing potent neutrophil activation. In vivo, it causes edema and increases vascular permeability after injection into mouse hind paws (10-100 ug/paw). In anesthetized rats, it decreases the blood pressure by approximately 15%, with a rapid return to the resting level. Is an effective inhibitor of cell growth in some cancer cell lines, especially against renal and pancreatic cancer cell lines, human breast and ovarian carcinoma, glioblastoma and a bovine brain microvascular endothelial cell line. This is C-type lectin BJcuL from Bothrops jararacussu (Jararacussu).